The chain runs to 225 residues: Dynein axonemal assembly factor 19 (225 aa).

A coiled-coil region spans residues 8–32 (DFRELERELANALAADQKYSRENDA).

It belongs to the DNAAF19/PR46b family. Homodimer.

The protein resides in the cytoplasm. It localises to the cell projection. It is found in the cilium. Its subcellular location is the flagellum. In terms of biological role, dynein-attachment factor required for cilia motility. This chain is Dynein axonemal assembly factor 19 (dnaaf19), found in Xenopus tropicalis (Western clawed frog).